Reading from the N-terminus, the 401-residue chain is Probable trafficking protein particle complex subunit 13 homolog (401 aa).

Belongs to the TRAPPC13 family.

This is Probable trafficking protein particle complex subunit 13 homolog from Caenorhabditis briggsae.